The following is a 20-amino-acid chain: Antiviral protein Y3 (20 aa).

This is Antiviral protein Y3 from Pleurotus citrinopileatus (Golden oyster mushroom).